The following is a 583-amino-acid chain: Malonate--CoA ligase ACSF3, mitochondrial (583 aa).

Residues 1-27 constitute a mitochondrion transit peptide; that stretch reads MPPHLALPFRRLFWSLASSQLIPRRHR. Residues 202 to 210, Asp-455, Arg-469, and Lys-561 each bind ATP; that span reads TSGTTGRPK.

Belongs to the ATP-dependent AMP-binding enzyme family.

The protein localises to the mitochondrion. The enzyme catalyses tetracosanoate + ATP + CoA = tetracosanoyl-CoA + AMP + diphosphate. The catalysed reaction is malonate + ATP + CoA = malonyl-CoA + AMP + diphosphate. Its function is as follows. Catalyzes the initial reaction in intramitochondrial fatty acid synthesis, by activating malonate and methylmalonate, but not acetate, into their respective CoA thioester. May have some preference toward very-long-chain substrates. The protein is Malonate--CoA ligase ACSF3, mitochondrial of Mus musculus (Mouse).